A 39-amino-acid chain; its full sequence is Omega-theraphotoxin-Asp1a (39 aa).

Intrachain disulfides connect cysteine 4–cysteine 25, cysteine 8–cysteine 31, and cysteine 17–cysteine 36.

In terms of tissue distribution, expressed by the venom gland.

Its subcellular location is the secreted. Toxin that inhibits voltage-gated calcium channels in rat cerebellar granule cells (IC(50)&lt;200 nM). Is lethal to cockroaches. This is Omega-theraphotoxin-Asp1a from Aphonopelma sp. (American tarantula).